Reading from the N-terminus, the 219-residue chain is Uracil-DNA glycosylase (219 aa).

The active-site Proton acceptor is Asp-61.

Belongs to the uracil-DNA glycosylase (UDG) superfamily. UNG family.

Its subcellular location is the cytoplasm. The enzyme catalyses Hydrolyzes single-stranded DNA or mismatched double-stranded DNA and polynucleotides, releasing free uracil.. Excises uracil residues from the DNA which can arise as a result of misincorporation of dUMP residues by DNA polymerase or due to deamination of cytosine. This chain is Uracil-DNA glycosylase, found in Neisseria meningitidis serogroup A / serotype 4A (strain DSM 15465 / Z2491).